The chain runs to 131 residues: Histone H2B.1 (131 aa).

Basic and acidic residues predominate over residues 1 to 19 (MSAKAEKKPASKAPAEKKP). The segment at 1–38 (MSAKAEKKPASKAPAEKKPAAKKTSTSTDGKKRSKARK) is disordered. N6-acetyllysine; alternate is present on residues K7 and K8. Residues K7 and K8 each participate in a glycyl lysine isopeptide (Lys-Gly) (interchain with G-Cter in SUMO); alternate cross-link. S11 is subject to Phosphoserine. N6-acetyllysine is present on K12. N6-acetyllysine; alternate is present on residues K17, K18, K22, and K23. Glycyl lysine isopeptide (Lys-Gly) (interchain with G-Cter in SUMO); alternate cross-links involve residues K17 and K18. Residue K22 is modified to N6-butyryllysine; alternate. K23 is modified (N6-methyllysine; alternate). At K35 the chain carries N6-succinyllysine. K38 carries the post-translational modification N6,N6-dimethyllysine. N6-succinyllysine is present on K47. Residue K124 forms a Glycyl lysine isopeptide (Lys-Gly) (interchain with G-Cter in ubiquitin) linkage.

It belongs to the histone H2B family. The nucleosome is a histone octamer containing two molecules each of H2A, H2B, H3 and H4 assembled in one H3-H4 heterotetramer and two H2A-H2B heterodimers. The octamer wraps approximately 147 bp of DNA. Post-translationally, monoubiquitinated by the RAD6/UBC2-BRE1 complex to form H2BK123ub1. H2BK123ub1 gives a specific tag for epigenetic transcriptional activation and is also prerequisite for H3K4me and H3K79me formation. H2BK123ub1 also modulates the formation of double-strand breaks during meiosis and is a prerequisite for DNA-damage checkpoint activation. Deubiquitination is performed by UBP8 in presence of SGF11. Phosphorylated by STE20 to form H2BS10ph during progression through meiotic prophase. May be correlated with chromosome condensation. H2BS10ph is also formed after H(2)O(2) treatment, and is a step leading to apoptosis. In terms of processing, acetylated by GCN5, a component of the SAGA complex, to form H2BK11ac and H2BK16ac. H2BK16ac can also be formed by ESA1, a component of the NuA4 histone acetyltransferase (HAT) complex. Acetylation of N-terminal lysines and particularly formation of H2BK11acK16ac has a positive effect on transcription. Post-translationally, sumoylation to form H2BK6su or H2BK7su, and probably also H2BK16su or H2BK17su, occurs preferentially near the telomeres and represses gene transcription.

The protein resides in the nucleus. It localises to the chromosome. Core component of nucleosome. Nucleosomes wrap and compact DNA into chromatin, limiting DNA accessibility to the cellular machineries which require DNA as a template. Histones thereby play a central role in transcription regulation, DNA repair, DNA replication and chromosomal stability. DNA accessibility is regulated via a complex set of post-translational modifications of histones, also called histone code, and nucleosome remodeling. The chain is Histone H2B.1 (HTB1) from Saccharomyces cerevisiae (strain ATCC 204508 / S288c) (Baker's yeast).